The primary structure comprises 949 residues: Glutamate receptor ionotropic, kainate 1 (949 aa).

Residues 1 to 30 form the signal peptide; that stretch reads MERSTVLIQPGLWTRDTSWTLLYFLCYILP. At 31–576 the chain is on the extracellular side; the sequence is QTSPQVLRIG…VFSFLNPLSP (546 aa). Asparagine 68, asparagine 74, asparagine 276, asparagine 379, asparagine 428, asparagine 439, and asparagine 446 each carry an N-linked (GlcNAc...) asparagine glycan. L-glutamate-binding residues include proline 531, threonine 533, and arginine 538. The N-linked (GlcNAc...) asparagine glycan is linked to asparagine 561. A helical transmembrane segment spans residues 577-597; that stretch reads DIWMYVLLACLGVSCVLFVIA. At 598 to 653 the chain is on the cytoplasmic side; it reads RFTPYEWYNPHPCNPDSDVVENNFTLLNSFWFGVGALMQQGSELMPKALSTRIVGG. Residues 654–674 form a helical membrane-spanning segment; it reads IWWFFTLIIISSYTANLAAFL. At 675–834 the chain is on the extracellular side; that stretch reads TVERMESPID…KEASALGVEN (160 aa). L-glutamate-binding residues include serine 704 and threonine 705. Serine 725 bears the Phosphoserine; by PKC mark. Position 753 (glutamate 753) interacts with L-glutamate. Threonine 761 carries the phosphothreonine; by PKC modification. A disulfide bond links cysteine 765 and cysteine 819. Asparagine 766 carries N-linked (GlcNAc...) asparagine glycosylation. A helical transmembrane segment spans residues 835-855; it reads IGGIFIVLAAGLVLSVFVAIG. The Cytoplasmic portion of the chain corresponds to 856-949; sequence EFLYKSRKNN…RRTQRKETVA (94 aa).

It belongs to the glutamate-gated ion channel (TC 1.A.10.1) family. GRIK1 subfamily. In terms of assembly, homotetramer or heterotetramer of pore-forming glutamate receptor subunits. Tetramers may be formed by the dimerization of dimers. Can form functional heteromeric receptors with GRIK4 and GRIK5. Interacts with KLHL17. In terms of tissue distribution, expressed in the olfactory bulb (at protein level). Expressed in subsets of neurons throughout the developing and adult central and peripheral nervous systems. In the CNS principally in the medial amygdaloid nuclei, medial habenulae, pyriform and cingulate cortices, and Purkinje cell layer. Also highly expressed in embryonic and adult dorsal root ganglia. Expressed at high levels in the trigeminal ganglion neurons.

The protein resides in the cell membrane. It localises to the postsynaptic cell membrane. It catalyses the reaction Ca(2+)(in) = Ca(2+)(out). Ionotropic glutamate receptor that functions as a cation-permeable ligand-gated ion channel, gated by L-glutamate and the glutamatergic agonist kainic acid. L-glutamate acts as an excitatory neurotransmitter at many synapses in the central nervous system. Binding of the excitatory neurotransmitter L-glutamate induces a conformation change, leading to the opening of the cation channel, and thereby converts the chemical signal to an electrical impulse. The receptor then desensitizes rapidly and enters a transient inactive state, characterized by the presence of bound agonist. The sequence is that of Glutamate receptor ionotropic, kainate 1 (Grik1) from Rattus norvegicus (Rat).